We begin with the raw amino-acid sequence, 531 residues long: 2,3-bisphosphoglycerate-independent phosphoglycerate mutase (531 aa).

Asp15 and Ser65 together coordinate Mn(2+). Ser65 serves as the catalytic Phosphoserine intermediate. Residues His126, 155–156 (RD), Arg187, Arg193, 257–260 (RPDR), and Lys330 each bind substrate. Positions 397, 401, 438, 439, and 456 each coordinate Mn(2+).

This sequence belongs to the BPG-independent phosphoglycerate mutase family. As to quaternary structure, monomer. It depends on Mn(2+) as a cofactor.

The catalysed reaction is (2R)-2-phosphoglycerate = (2R)-3-phosphoglycerate. The protein operates within carbohydrate degradation; glycolysis; pyruvate from D-glyceraldehyde 3-phosphate: step 3/5. Functionally, catalyzes the interconversion of 2-phosphoglycerate and 3-phosphoglycerate. This chain is 2,3-bisphosphoglycerate-independent phosphoglycerate mutase, found in Thermosynechococcus vestitus (strain NIES-2133 / IAM M-273 / BP-1).